Here is a 377-residue protein sequence, read N- to C-terminus: Succinyl-diaminopimelate desuccinylase (377 aa).

A Zn(2+)-binding site is contributed by His66. Residue Asp68 is part of the active site. Residue Asp99 coordinates Zn(2+). Residue Glu133 is the Proton acceptor of the active site. Residues Glu134, Glu162, and His348 each coordinate Zn(2+).

Belongs to the peptidase M20A family. DapE subfamily. As to quaternary structure, homodimer. Zn(2+) serves as cofactor. It depends on Co(2+) as a cofactor.

It carries out the reaction N-succinyl-(2S,6S)-2,6-diaminopimelate + H2O = (2S,6S)-2,6-diaminopimelate + succinate. It participates in amino-acid biosynthesis; L-lysine biosynthesis via DAP pathway; LL-2,6-diaminopimelate from (S)-tetrahydrodipicolinate (succinylase route): step 3/3. Functionally, catalyzes the hydrolysis of N-succinyl-L,L-diaminopimelic acid (SDAP), forming succinate and LL-2,6-diaminopimelate (DAP), an intermediate involved in the bacterial biosynthesis of lysine and meso-diaminopimelic acid, an essential component of bacterial cell walls. The chain is Succinyl-diaminopimelate desuccinylase from Methylococcus capsulatus (strain ATCC 33009 / NCIMB 11132 / Bath).